Consider the following 567-residue polypeptide: Protein phosphatase 1 regulatory inhibitor subunit 16B (567 aa).

Residues Glu-15–Arg-55 are a coiled coil. The residue at position 69 (Ser-69) is a Phosphoserine. 4 ANK repeats span residues Asp-100–Ala-129, Glu-133–Ala-162, Gln-228–Val-257, and Asp-261–Ala-290. Residues Ser-333, Ser-337, and Ser-350 each carry the phosphoserine modification. Residues Arg-378–Glu-403 are disordered. Residues Asp-385 to Glu-403 are compositionally biased toward basic and acidic residues. Ser-476 carries the post-translational modification Phosphoserine. Over residues Ser-504–Glu-515 the composition is skewed to polar residues. A disordered region spans residues Ser-504–Thr-525. An ANK 5 repeat occupies Ser-530–Lys-559. Cys-563 carries the S-palmitoyl cysteine lipid modification. Cys-564 is subject to Cysteine methyl ester. Cys-564 carries S-farnesyl cysteine lipidation. Positions Arg-565 to Ser-567 are cleaved as a propeptide — removed in mature form.

As to quaternary structure, interacts with PPP1CA, PPP1CB and MSN. Interacts (via its fourth ankyrin repeat) with the mature dimeric form of RPSA/LAMR1. Interacts with EEF1A1. Interacts with PTEN. Interacts with ECE1. Phosphorylated by PKA and, after PKA priming, by GSK3B. Phosphorylation by GSK3B reduces its association with PP1C and enhances PP1C activity. Dephosphorylation by its associated PP1C results in enhanced association with PP1C, but reduced PP1C activity.

The protein localises to the cell membrane. Its subcellular location is the nucleus. It localises to the cell projection. Functionally, regulator of protein phosphatase 1 (PP1) that acts as a positive regulator of pulmonary endothelial cell (EC) barrier function. Involved in the regulation of the PI3K/AKT signaling pathway, angiogenesis and endothelial cell proliferation. Regulates angiogenesis and endothelial cell proliferation through the control of ECE1 dephosphorylation, trafficking and activity. Protects the endothelial barrier from lipopolysaccharide (LPS)-induced vascular leakage. Involved in the regulation of endothelial cell filopodia extension. May be a downstream target for TGF-beta1 signaling cascade in endothelial cells. Involved in PKA-mediated moesin dephosphorylation which is important in EC barrier protection against thrombin stimulation. Promotes the interaction of PPP1CA with RPSA/LAMR1 and in turn facilitates the dephosphorylation of RPSA/LAMR1. Involved in the dephosphorylation of EEF1A1. In Homo sapiens (Human), this protein is Protein phosphatase 1 regulatory inhibitor subunit 16B (PPP1R16B).